The primary structure comprises 129 residues: Small ribosomal subunit protein uS12 (129 aa).

Residue D89 is modified to 3-methylthioaspartic acid.

Belongs to the universal ribosomal protein uS12 family. In terms of assembly, part of the 30S ribosomal subunit. Contacts proteins S8 and S17. May interact with IF1 in the 30S initiation complex.

In terms of biological role, with S4 and S5 plays an important role in translational accuracy. Interacts with and stabilizes bases of the 16S rRNA that are involved in tRNA selection in the A site and with the mRNA backbone. Located at the interface of the 30S and 50S subunits, it traverses the body of the 30S subunit contacting proteins on the other side and probably holding the rRNA structure together. The combined cluster of proteins S8, S12 and S17 appears to hold together the shoulder and platform of the 30S subunit. The polypeptide is Small ribosomal subunit protein uS12 (Rickettsia akari (strain Hartford)).